Reading from the N-terminus, the 186-residue chain is Large ribosomal subunit protein uL5 (186 aa).

This sequence belongs to the universal ribosomal protein uL5 family. Part of the 50S ribosomal subunit; contacts the 5S rRNA and probably tRNA. Forms a bridge to the 30S subunit in the 70S ribosome.

Its function is as follows. This is one of the proteins that bind and probably mediate the attachment of the 5S RNA into the large ribosomal subunit, where it forms part of the central protuberance. In the 70S ribosome it contacts protein S13 of the 30S subunit (bridge B1b), connecting the 2 subunits; this bridge is implicated in subunit movement. May contact the P site tRNA; the 5S rRNA and some of its associated proteins might help stabilize positioning of ribosome-bound tRNAs. The protein is Large ribosomal subunit protein uL5 of Pyrococcus furiosus (strain ATCC 43587 / DSM 3638 / JCM 8422 / Vc1).